Reading from the N-terminus, the 208-residue chain is Holliday junction branch migration complex subunit RuvA (208 aa).

Positions 1 to 63 (MIGMLTGRVE…QDAITLHGFL (63 aa)) are domain I. The segment at 64–142 (DRDAKKTFLQ…LSQIEGASAQ (79 aa)) is domain II. The tract at residues 143–151 (AATSKSPVD) is flexible linker. A domain III region spans residues 151-208 (DTGTEQVVEGLISLGWRQQDAQQAVAEACAENDIPTPLATDDVPRVLRLALALMDRGR).

The protein belongs to the RuvA family. In terms of assembly, homotetramer. Forms an RuvA(8)-RuvB(12)-Holliday junction (HJ) complex. HJ DNA is sandwiched between 2 RuvA tetramers; dsDNA enters through RuvA and exits via RuvB. An RuvB hexamer assembles on each DNA strand where it exits the tetramer. Each RuvB hexamer is contacted by two RuvA subunits (via domain III) on 2 adjacent RuvB subunits; this complex drives branch migration. In the full resolvosome a probable DNA-RuvA(4)-RuvB(12)-RuvC(2) complex forms which resolves the HJ.

The protein localises to the cytoplasm. In terms of biological role, the RuvA-RuvB-RuvC complex processes Holliday junction (HJ) DNA during genetic recombination and DNA repair, while the RuvA-RuvB complex plays an important role in the rescue of blocked DNA replication forks via replication fork reversal (RFR). RuvA specifically binds to HJ cruciform DNA, conferring on it an open structure. The RuvB hexamer acts as an ATP-dependent pump, pulling dsDNA into and through the RuvAB complex. HJ branch migration allows RuvC to scan DNA until it finds its consensus sequence, where it cleaves and resolves the cruciform DNA. The polypeptide is Holliday junction branch migration complex subunit RuvA (Bifidobacterium longum (strain DJO10A)).